The sequence spans 258 residues: Imidazole glycerol phosphate synthase subunit HisF (258 aa).

Active-site residues include Asp-12 and Asp-131.

Belongs to the HisA/HisF family. Heterodimer of HisH and HisF.

Its subcellular location is the cytoplasm. The enzyme catalyses 5-[(5-phospho-1-deoxy-D-ribulos-1-ylimino)methylamino]-1-(5-phospho-beta-D-ribosyl)imidazole-4-carboxamide + L-glutamine = D-erythro-1-(imidazol-4-yl)glycerol 3-phosphate + 5-amino-1-(5-phospho-beta-D-ribosyl)imidazole-4-carboxamide + L-glutamate + H(+). The protein operates within amino-acid biosynthesis; L-histidine biosynthesis; L-histidine from 5-phospho-alpha-D-ribose 1-diphosphate: step 5/9. Functionally, IGPS catalyzes the conversion of PRFAR and glutamine to IGP, AICAR and glutamate. The HisF subunit catalyzes the cyclization activity that produces IGP and AICAR from PRFAR using the ammonia provided by the HisH subunit. In Corynebacterium diphtheriae (strain ATCC 700971 / NCTC 13129 / Biotype gravis), this protein is Imidazole glycerol phosphate synthase subunit HisF.